We begin with the raw amino-acid sequence, 415 residues long: Serine hydroxymethyltransferase (415 aa).

(6S)-5,6,7,8-tetrahydrofolate-binding positions include L117 and 121 to 123 (GHL). K226 carries the N6-(pyridoxal phosphate)lysine modification. E241 is a binding site for (6S)-5,6,7,8-tetrahydrofolate.

The protein belongs to the SHMT family. In terms of assembly, homodimer. The cofactor is pyridoxal 5'-phosphate.

Its subcellular location is the cytoplasm. The catalysed reaction is (6R)-5,10-methylene-5,6,7,8-tetrahydrofolate + glycine + H2O = (6S)-5,6,7,8-tetrahydrofolate + L-serine. It participates in one-carbon metabolism; tetrahydrofolate interconversion. The protein operates within amino-acid biosynthesis; glycine biosynthesis; glycine from L-serine: step 1/1. In terms of biological role, catalyzes the reversible interconversion of serine and glycine with tetrahydrofolate (THF) serving as the one-carbon carrier. This reaction serves as the major source of one-carbon groups required for the biosynthesis of purines, thymidylate, methionine, and other important biomolecules. Also exhibits THF-independent aldolase activity toward beta-hydroxyamino acids, producing glycine and aldehydes, via a retro-aldol mechanism. The polypeptide is Serine hydroxymethyltransferase (Bacillus pumilus (strain SAFR-032)).